Consider the following 429-residue polypeptide: Septin-11 (429 aa).

Residue A2 is modified to N-acetylalanine. Position 9 is a phosphoserine (S9). The region spanning 38–304 is the Septin-type G domain; it reads QGFCFNILCV…ELYRRCKLEE (267 aa). Positions 48–55 are G1 motif; that stretch reads GETGIGKS. Residues 48-55, G103, 184-192, G238, and R253 contribute to the GTP site; these read GETGIGKS and KADTIAKNE. The interval 100 to 103 is G3 motif; that stretch reads DTVG. A G4 motif region spans residues 183-186; sequence AKAD. The stretch at 320 to 415 forms a coiled coil; sequence QETYEAKRNE…QSQAQQSGAQ (96 aa). Positions 398–429 are disordered; it reads KKAAAQLLQSQAQQSGAQQTKKDKDKKNASFT. A compositionally biased stretch (low complexity) spans 401-416; sequence AAQLLQSQAQQSGAQQ. Positions 417–429 are enriched in basic and acidic residues; sequence TKKDKDKKNASFT.

This sequence belongs to the TRAFAC class TrmE-Era-EngA-EngB-Septin-like GTPase superfamily. Septin GTPase family. Septins polymerize into heterooligomeric protein complexes that form filaments, and can associate with cellular membranes, actin filaments and microtubules. Forms homooligomers. GTPase activity is required for filament formation. Interacts with SEPTIN7, SEPTIN9 and SEPTIN12. As to expression, widely expressed, except in leukocytes.

Its subcellular location is the cytoplasm. It is found in the cytoskeleton. The protein resides in the synapse. It localises to the cell projection. The protein localises to the dendritic spine. Its subcellular location is the axon. Functionally, filament-forming cytoskeletal GTPase. May play a role in cytokinesis (Potential). May play a role in the cytoarchitecture of neurons, including dendritic arborization and dendritic spines, and in GABAergic synaptic connectivity. During Listeria monocytogenes infection, not required for the bacterial entry process, but restricts its efficacy. This chain is Septin-11, found in Homo sapiens (Human).